The following is a 513-amino-acid chain: GMP synthase [glutamine-hydrolyzing] (513 aa).

Residues Lys-8–Asn-198 enclose the Glutamine amidotransferase type-1 domain. Cys-85 (nucleophile) is an active-site residue. Catalysis depends on residues His-172 and Glu-174. One can recognise a GMPS ATP-PPase domain in the interval Trp-199–Arg-388. Ser-226–Ser-232 serves as a coordination point for ATP.

Homodimer.

It catalyses the reaction XMP + L-glutamine + ATP + H2O = GMP + L-glutamate + AMP + diphosphate + 2 H(+). The protein operates within purine metabolism; GMP biosynthesis; GMP from XMP (L-Gln route): step 1/1. In terms of biological role, catalyzes the synthesis of GMP from XMP. In Lactococcus lactis subsp. cremoris (strain SK11), this protein is GMP synthase [glutamine-hydrolyzing].